We begin with the raw amino-acid sequence, 539 residues long: MADEDGEGIHPSTPHRNGGGGGGSGLHCAGNGGGGGGGPRVVRIVKSESGYGFNVRGQVSEGGQLRSINGELYAPLQHVSAVLPGGAADRAGVRKGDRILEVNGVNVEGATHKQVVDLIRAGEKELILTVLSVPPHEADNLDPSDDSLGQSFYDYTEKQAVPISVPTYKHVEQNGEKFVVYNVYMAGRQLCSKRYREFAILHQNLKREFANFTFPRLPGKWPFSLSEQQLDARRRGLEEYLEKVCSIRVIGESDIMQEFLSESDENYNGVSDVELRVALPDGATVTVRVKKNSTTDQVYQAIAAKVGMDSTTVNYFALFEVINHSFVRKLAPNEFPHKLYVQNYTSAVPGTCLTIRKWLFTTEEEVLLNDNDLAVTYFFHQAVDDVKKGYIKAEEKSYQLQKLYEQRKMVMYLNMLRTCEGYNEIIFPHCACDSRRKGHVITAISITHFKLHACTEEGQLENQVIAFEWDEMQRWDTDEEGMAFCFEYARGEKKPRWVKIFTPYFNYMHECFERVFCELKWRKENIFQMARSQQRDVAT.

The tract at residues methionine 1 to arginine 40 is disordered. Over residues asparagine 17–proline 39 the composition is skewed to gly residues. A PDZ domain is found at valine 41–proline 134. Phosphoserine is present on residues serine 49 and serine 60. Residues glutamine 159–tyrosine 267 form the PX domain. In terms of domain architecture, Ras-associating spans serine 271–phenylalanine 360. The tract at residues serine 271–phenylalanine 360 is FERM-like region F1. Residues asparagine 371 to cysteine 419 form an FERM-like region F2 region. Residues asparagine 423–lysine 523 form an FERM-like region F3 region.

In terms of assembly, core component of the SNX27-retromer, a multiprotein complex composed of SNX27, the WASH complex and the retromer complex. Interacts (via PDZ domain) with a number of target transmembrane proteins (via PDZ-binding motif): ABCC4, ADRB2, ARHGEF7, GRIA1, GRIA2, GRIN1, GRIN2A GRIN2C, KCNJ6, KCNJ9 and SLC2A1/GLUT1. Interacts (via the FERM-like regions) with the WASH complex. Interacts with SNX1. Interacts with CYTIP. Interacts with DGKZ. Interacts with MCC. Interacts (via PDZ domains) with SLC9A3; directs SLC9A3 membrane insertion from early endosomes to the plasma membrane. Isoform 1 is predominantly expressed in the testis, whereas isoform 2 is predominant in various brain regions, including, neocortex, paleocortex, striatum, hippocampus, cerebellum and brain stem. Expressed in cells of hematopoietic origin.

It is found in the early endosome membrane. It localises to the cytoplasm. The protein localises to the cytosol. In terms of biological role, involved in the retrograde transport from endosome to plasma membrane, a trafficking pathway that promotes the recycling of internalized transmembrane proteins. Following internalization, endocytosed transmembrane proteins are delivered to early endosomes and recycled to the plasma membrane instead of being degraded in lysosomes. SNX27 specifically binds and directs sorting of a subset of transmembrane proteins containing a PDZ-binding motif at the C-terminus: following interaction with target transmembrane proteins, associates with the retromer complex, preventing entry into the lysosomal pathway, and promotes retromer-tubule based plasma membrane recycling. SNX27 also binds with the WASH complex. Interacts with membranes containing phosphatidylinositol-3-phosphate (PtdIns(3P)). May participate in establishment of natural killer cell polarity. Recruits CYTIP to early endosomes. In Rattus norvegicus (Rat), this protein is Sorting nexin-27 (Snx27).